A 610-amino-acid polypeptide reads, in one-letter code: UvrABC system protein C (610 aa).

One can recognise a GIY-YIG domain in the interval 16–94; the sequence is SAPGVYRMYD…IKQYMPKYNV (79 aa). Residues 203 to 238 enclose the UVR domain; that stretch reads KQVISQLVAKMETAAIDMEYERAAQYRDQITALRRV.

It belongs to the UvrC family. In terms of assembly, interacts with UvrB in an incision complex.

It localises to the cytoplasm. Functionally, the UvrABC repair system catalyzes the recognition and processing of DNA lesions. UvrC both incises the 5' and 3' sides of the lesion. The N-terminal half is responsible for the 3' incision and the C-terminal half is responsible for the 5' incision. This is UvrABC system protein C from Shewanella frigidimarina (strain NCIMB 400).